The sequence spans 331 residues: Junctional sarcoplasmic reticulum protein 1 (331 aa).

Disordered stretches follow at residues 1–118 (MSMT…EELP) and 157–331 (RVPE…KGRD). A mediates interaction with CACNA1S region spans residues 3-76 (MTTRAWEELD…EKEPAARGTP (74 aa)). Composition is skewed to basic and acidic residues over residues 21–35 (LEDH…EDRA) and 61–71 (TRPKKMEKEPA). Pro residues-rich tracts occupy residues 103-112 (PLQPPPPPPA) and 161-175 (PWVP…PSSP). 2 stretches are compositionally biased toward basic and acidic residues: residues 222–242 (AVRE…PRRE) and 250–302 (PRKE…EPRK). Residues 320–331 (SRQKLRAGKGRD) show a composition bias toward basic residues.

In terms of assembly, interacts with CACNA1S, CACNB1 and calsequestrin.

It is found in the sarcoplasmic reticulum membrane. It localises to the endoplasmic reticulum membrane. Its function is as follows. Involved in skeletal muscle excitation/contraction coupling (EC), probably acting as a regulator of the voltage-sensitive calcium channel CACNA1S. EC is a physiological process whereby an electrical signal (depolarization of the plasma membrane) is converted into a chemical signal, a calcium gradient, by the opening of ryanodine receptor calcium release channels. May regulate CACNA1S membrane targeting and activity. In Homo sapiens (Human), this protein is Junctional sarcoplasmic reticulum protein 1 (JSRP1).